Here is a 206-residue protein sequence, read N- to C-terminus: MARTLLILCTLMAWAWTGEAVMFKLTPNTQKCLKEDIQANQLVIGEYEVSDVPGQVIDYIARDTKGHILSQQEHITKGKFSFMSEVYDAYEICFISKVPPHQRGIPQEVSLSTKKGVETKSYEGIGEASKLKPLEVDLKRLEDLSDSIVRDFVLMRKREEEMRDTNEKTNSRVLFFSIFSMCCLLGLATWQVLYLRRYFKAKKLIE.

Residues 1 to 20 (MARTLLILCTLMAWAWTGEA) form the signal peptide. Residues 21-172 (VMFKLTPNTQ…RDTNEKTNSR (152 aa)) are Lumenal-facing. Residues 30–140 (QKCLKEDIQA…LKPLEVDLKR (111 aa)) form the GOLD domain. A helical membrane pass occupies residues 173-193 (VLFFSIFSMCCLLGLATWQVL). Over 194–206 (YLRRYFKAKKLIE) the chain is Cytoplasmic.

It belongs to the EMP24/GP25L family.

The protein localises to the membrane. Eca and bai are essential, though not redundant, for dorsoventral patterning of the embryo. Specifically required during early embryogenesis for the activity of maternal tkv, while the zygotic tkv is not affected. This chain is Transmembrane emp24 domain-containing protein bai, found in Drosophila ananassae (Fruit fly).